The sequence spans 156 residues: Small ribosomal subunit protein uS7 (156 aa).

It belongs to the universal ribosomal protein uS7 family. As to quaternary structure, part of the 30S ribosomal subunit. Contacts proteins S9 and S11.

One of the primary rRNA binding proteins, it binds directly to 16S rRNA where it nucleates assembly of the head domain of the 30S subunit. Is located at the subunit interface close to the decoding center, probably blocks exit of the E-site tRNA. This Desulfosudis oleivorans (strain DSM 6200 / JCM 39069 / Hxd3) (Desulfococcus oleovorans) protein is Small ribosomal subunit protein uS7.